A 296-amino-acid chain; its full sequence is NH(3)-dependent NAD(+) synthetase (296 aa).

30–37 (GVSGGLDS) serves as a coordination point for ATP. Asp36 contributes to the Mg(2+) binding site. A deamido-NAD(+)-binding site is contributed by Arg157. A Mg(2+)-binding site is contributed by Glu182. Deamido-NAD(+)-binding residues include Lys190 and Asp197. The ATP site is built by Lys206 and Ser228.

This sequence belongs to the NAD synthetase family. Homodimer.

The catalysed reaction is deamido-NAD(+) + NH4(+) + ATP = AMP + diphosphate + NAD(+) + H(+). The protein operates within cofactor biosynthesis; NAD(+) biosynthesis; NAD(+) from deamido-NAD(+) (ammonia route): step 1/1. In terms of biological role, catalyzes the ATP-dependent amidation of deamido-NAD to form NAD. Uses ammonia as a nitrogen source. The protein is NH(3)-dependent NAD(+) synthetase of Coprothermobacter proteolyticus (strain ATCC 35245 / DSM 5265 / OCM 4 / BT).